Reading from the N-terminus, the 281-residue chain is Cell division protein DivIB (281 aa).

Positions 1-36 (MARKRITRRDPEEELSKFLRHEPGQGQETRKLSSQL) are disordered. Residues 1 to 46 (MARKRITRRDPEEELSKFLRHEPGQGQETRKLSSQLTSLKKERRRG) are Cytoplasmic-facing. Over residues 8 to 31 (RRDPEEELSKFLRHEPGQGQETRK) the composition is skewed to basic and acidic residues. A helical membrane pass occupies residues 47 to 69 (LLTRLGSIMAVCLLAIAFLTYYV). The Extracellular portion of the chain corresponds to 70-281 (SPLADVSTVR…SAEKKAYGLS (212 aa)). One can recognise a POTRA domain in the interval 73-144 (ADVSTVRVLG…NTLNMQVHER (72 aa)).

Belongs to the FtsQ/DivIB family. DivIB subfamily.

The protein resides in the cell membrane. Functionally, cell division protein that may be involved in stabilizing or promoting the assembly of the division complex. This Lactobacillus delbrueckii subsp. bulgaricus (strain ATCC 11842 / DSM 20081 / BCRC 10696 / JCM 1002 / NBRC 13953 / NCIMB 11778 / NCTC 12712 / WDCM 00102 / Lb 14) protein is Cell division protein DivIB.